An 82-amino-acid chain; its full sequence is MCRCRHPSCITETVFPPLTWLDSEWDEICSLPVARNETHDPSGPRAPVSSMRLGPRSRPYHHGTARLRGSPNCSRDSSSAAT.

The interval 34–82 (ARNETHDPSGPRAPVSSMRLGPRSRPYHHGTARLRGSPNCSRDSSSAAT) is disordered. Residues 71–82 (PNCSRDSSSAAT) show a composition bias toward polar residues.

Functionally, part of the gene cluster that mediates the biosynthesis of the lipopeptide antibiotics leucinostatins that show extensive biological activities, including antimalarial, antiviral, antibacterial, antifungal, and antitumor activities, as well as phytotoxic. The function of lcsM within the leucinostatins biosynthesis has not been identified yet. The polypeptide is Leucinostatins biosynthesis cluster protein M (Purpureocillium lilacinum (Paecilomyces lilacinus)).